Here is a 426-residue protein sequence, read N- to C-terminus: MLDLKRIRNNSNEIKEALNNRGEKFDVTVIDEVLKLDEERRNILVKVEVLKSKRNQVSSEVPKLKKEGKDVSNIVAEMKNLSEEIKGFDTTLAKIDEKIQYIMLRIPNIPNPQVPDGETDEDNIEIRNWSEPTKFDFEPKAHWDIGSNLNILDFERAGKVTGSRFTFYKGLGARLERSLISYFLDTHTEKHGYTEILPPYMVNRTSMIGTGQLPKFEEDAFKISEDDYFLIPTAEVPVTNLYRDEILKGDELPLKHVAYSACFRSEAGSAGRDTRGLVRQHQFNKVELVKFTKPEQSYEELEKLTNDAETVLKELGIPYRVVRICKGDLGFTAALKYDLEVWMPSYNRYVEISSCSNFEDFQARRANIRYKEDAKAKPQYVHTLNGSGVAIGRTVAAILENYQNEDGSVTIPEVLRPYMGGKEAIK.

233 to 235 lines the L-serine pocket; it reads TAE. Residue 264–266 coordinates ATP; sequence RSE. Glutamate 287 is a binding site for L-serine. ATP is bound at residue 351 to 354; sequence EISS. Serine 387 contributes to the L-serine binding site.

The protein belongs to the class-II aminoacyl-tRNA synthetase family. Type-1 seryl-tRNA synthetase subfamily. In terms of assembly, homodimer. The tRNA molecule binds across the dimer.

Its subcellular location is the cytoplasm. The catalysed reaction is tRNA(Ser) + L-serine + ATP = L-seryl-tRNA(Ser) + AMP + diphosphate + H(+). It catalyses the reaction tRNA(Sec) + L-serine + ATP = L-seryl-tRNA(Sec) + AMP + diphosphate + H(+). It participates in aminoacyl-tRNA biosynthesis; selenocysteinyl-tRNA(Sec) biosynthesis; L-seryl-tRNA(Sec) from L-serine and tRNA(Sec): step 1/1. Catalyzes the attachment of serine to tRNA(Ser). Is also able to aminoacylate tRNA(Sec) with serine, to form the misacylated tRNA L-seryl-tRNA(Sec), which will be further converted into selenocysteinyl-tRNA(Sec). This chain is Serine--tRNA ligase, found in Clostridium botulinum (strain Loch Maree / Type A3).